The following is a 542-amino-acid chain: MTRFIFITGGVVSSLGKGLASAALGALLQARGYKVRLRKLDPYLNVDPGTMSPTQHGEVFVTDDGAETDLDLGHYERFTGVSARRSDNVTTGRIYSDVIARERRGDYLGKTVQVIPHVTDAIKEFATADLTDEDFVLCEIGGTVGDIESLPFLEAIRQLRNEMGAERSLIIHLTLLPYIPSAGELKTKPTQHSVKELLGLGIQPDLLMCRSDRPIPEAERNKISLFCNVRREAVIPALDVDTIYQVPVSYHAQGLDVQVCRHFHLPMNEDLDLTRWQTIVDRVRHPEGEVTIAVVGKYTSLIDSYKSLAEALVHGGIANAVKVKLVWLDSEIFEREDAVHYLEGVNGILVPGGFGERGSEGKIEAARFARERSVPYFGICFGMQMAVIEFARHVAGLPGASSSEFGVPEVPLVGLMTEWVRGNERVARGSGDDLGGTMRLGAYECHLRALSKVREIYGAEVIHERHRHRYEVNVTFKDQLEEKGLAFSGMSPDGVLPEIVELPDHPWFIGVQFHPELKSKPFDPHPLFTSFVQAAITQSRLV.

The interval 1–265 (MTRFIFITGG…DVQVCRHFHL (265 aa)) is amidoligase domain. Position 13 (Ser13) interacts with CTP. Residue Ser13 coordinates UTP. ATP contacts are provided by residues 14 to 19 (SLGKGL) and Asp71. Positions 71 and 139 each coordinate Mg(2+). CTP-binding positions include 146–148 (DIE), 186–191 (KTKPTQ), and Lys222. UTP-binding positions include 186-191 (KTKPTQ) and Lys222. The 251-residue stretch at 291–541 (TIAVVGKYTS…VQAAITQSRL (251 aa)) folds into the Glutamine amidotransferase type-1 domain. Gly353 provides a ligand contact to L-glutamine. The active-site Nucleophile; for glutamine hydrolysis is the Cys380. L-glutamine-binding positions include 381–384 (FGMQ), Glu404, and Arg469. Residues His514 and Glu516 contribute to the active site.

The protein belongs to the CTP synthase family. As to quaternary structure, homotetramer.

It carries out the reaction UTP + L-glutamine + ATP + H2O = CTP + L-glutamate + ADP + phosphate + 2 H(+). It catalyses the reaction L-glutamine + H2O = L-glutamate + NH4(+). The enzyme catalyses UTP + NH4(+) + ATP = CTP + ADP + phosphate + 2 H(+). It functions in the pathway pyrimidine metabolism; CTP biosynthesis via de novo pathway; CTP from UDP: step 2/2. Its activity is regulated as follows. Allosterically activated by GTP, when glutamine is the substrate; GTP has no effect on the reaction when ammonia is the substrate. The allosteric effector GTP functions by stabilizing the protein conformation that binds the tetrahedral intermediate(s) formed during glutamine hydrolysis. Inhibited by the product CTP, via allosteric rather than competitive inhibition. Functionally, catalyzes the ATP-dependent amination of UTP to CTP with either L-glutamine or ammonia as the source of nitrogen. Regulates intracellular CTP levels through interactions with the four ribonucleotide triphosphates. This Rhodospirillum rubrum (strain ATCC 11170 / ATH 1.1.1 / DSM 467 / LMG 4362 / NCIMB 8255 / S1) protein is CTP synthase.